Consider the following 217-residue polypeptide: Cytidylate kinase (217 aa).

Gly-10–Thr-18 serves as a coordination point for ATP.

It belongs to the cytidylate kinase family. Type 1 subfamily.

The protein localises to the cytoplasm. The catalysed reaction is CMP + ATP = CDP + ADP. The enzyme catalyses dCMP + ATP = dCDP + ADP. The chain is Cytidylate kinase from Clostridium botulinum (strain Langeland / NCTC 10281 / Type F).